The following is a 591-amino-acid chain: L-fucose isomerase (591 aa).

Active-site proton acceptor residues include Glu337 and Asp361. 3 residues coordinate Mn(2+): Glu337, Asp361, and His528.

This sequence belongs to the L-fucose isomerase family. As to quaternary structure, homohexamer. The cofactor is Mn(2+).

It is found in the cytoplasm. The enzyme catalyses L-fucose = L-fuculose. Its pathway is carbohydrate degradation; L-fucose degradation; L-lactaldehyde and glycerone phosphate from L-fucose: step 1/3. Converts the aldose L-fucose into the corresponding ketose L-fuculose. This chain is L-fucose isomerase, found in Salmonella heidelberg (strain SL476).